Here is a 151-residue protein sequence, read N- to C-terminus: DPEWHTLDAHEVEQVQATWKAVSHDEVEILYTVFKAHPDIMAKFPKFAGKDLEAIKDTADFAVHASRIIGFFGEYVTLLGSSGNQAAIRTLLHDLGVFHKTRGITKAQFGEFRETMTAYLKGHNKWNADISHSWDDAFDKAFSVIFEVLES.

Positions 6 to 150 constitute a Globin domain; that stretch reads TLDAHEVEQV…AFSVIFEVLE (145 aa). Residues His-64 and His-99 each coordinate heme b.

The protein belongs to the globin family. As to quaternary structure, homodimer.

In Chironomus thummi thummi (Midge), this protein is Globin CTT-X (CTT-10).